A 373-amino-acid chain; its full sequence is Cytoplasmic tRNA 2-thiolation protein 1 (373 aa).

This sequence belongs to the TtcA family. CTU1/NCS6/ATPBD3 subfamily.

Its subcellular location is the cytoplasm. The protein operates within tRNA modification; 5-methoxycarbonylmethyl-2-thiouridine-tRNA biosynthesis. Plays a central role in 2-thiolation of mcm(5)S(2)U at tRNA wobble positions of tRNA(Lys), tRNA(Glu) and tRNA(Gln). Directly binds tRNAs and probably acts by catalyzing adenylation of tRNAs, an intermediate required for 2-thiolation. It is unclear whether it acts as a sulfurtransferase that transfers sulfur from thiocarboxylated URM1 onto the uridine of tRNAs at wobble position. Prior mcm(5) tRNA modification by the elongator complex is required for 2-thiolation. May also be involved in protein urmylation. This Eremothecium gossypii (strain ATCC 10895 / CBS 109.51 / FGSC 9923 / NRRL Y-1056) (Yeast) protein is Cytoplasmic tRNA 2-thiolation protein 1.